Reading from the N-terminus, the 26-residue chain is Dermaseptin-J2 (26 aa).

Valine amide is present on valine 26.

In terms of tissue distribution, expressed by the skin glands.

The protein resides in the secreted. Functionally, has antimicrobial activity. The polypeptide is Dermaseptin-J2 (Phasmahyla jandaia (Jandaia leaf frog)).